We begin with the raw amino-acid sequence, 181 residues long: MQNTNRKILWTSNESSDIAAPAYQTWAQEEGYEIISIGSSQYQSMENDAEFKSYTLNDFGDRFVNEFQTEEVPFHKLTEIEKDNWNWVMAKVKELTRVWSNWKNLYKHYEFSIIKKHPNAEGLHSNGRIQIVRKILNERSHLFNTIMHEICHATSFSPDVSQRFEQGLTSAFYPVMKLKPE.

It to M.pneumoniae MPN_635 C-terminal region.

This is an uncharacterized protein from Mycoplasma pneumoniae (strain ATCC 29342 / M129 / Subtype 1) (Mycoplasmoides pneumoniae).